Here is a 232-residue protein sequence, read N- to C-terminus: uncharacterized protein (232 aa).

The stretch at 89 to 140 (EFGTWQRRKNSLEDSLREVMKRRGELQDQLTAELGAIERMQTDLVGARQTLD) forms a coiled coil.

This is an uncharacterized protein from Mycobacterium leprae (strain TN).